Reading from the N-terminus, the 526-residue chain is Threonine synthase 1, chloroplastic (526 aa).

The transit peptide at 1–40 (MASSCLFNASVSSLNPKQDPIRRHRSTSLLRHRPVVISCT) directs the protein to the chloroplast. S-adenosyl-L-methionine is bound by residues 142–144 (PYG), 165–167 (SAF), Asn-172, Leu-173, Lys-181, and Asn-187. The residue at position 203 (Lys-203) is an N6-(pyridoxal phosphate)lysine. Residues 335 to 339 (GNLGN) and Thr-472 each bind pyridoxal 5'-phosphate.

Belongs to the threonine synthase family. Homodimer. It depends on pyridoxal 5'-phosphate as a cofactor.

It is found in the plastid. The protein resides in the chloroplast. It catalyses the reaction O-phospho-L-homoserine + H2O = L-threonine + phosphate. The protein operates within amino-acid biosynthesis; L-threonine biosynthesis; L-threonine from L-aspartate: step 5/5. Its activity is regulated as follows. Allosterically activated by S-adenosyl-L-methionine (SAM). Activated by S-adenosyl-L-ethionine, 5'-amino-5'-deoxyadenosine, sinefungin and 5'-deoxy-5-methylthioadenosine. Inhibited by AMP. Functionally, catalyzes the gamma-elimination of phosphate from L-phosphohomoserine and the beta-addition of water to produce L-threonine. The polypeptide is Threonine synthase 1, chloroplastic (TS1) (Arabidopsis thaliana (Mouse-ear cress)).